A 669-amino-acid polypeptide reads, in one-letter code: Trissin receptor (669 aa).

The segment covering 1-15 (MIMTMMQTVRAWQQE) has biased composition (polar residues). Positions 1 to 90 (MIMTMMQTVR…PTGQQPPRLP (90 aa)) are disordered. The Extracellular segment spans residues 1–184 (MIMTMMQTVR…EYIFDRTDVR (184 aa)). The segment covering 55 to 74 (NQNNGSPNSSPNQSTSAFRQ) has biased composition (low complexity). The N-linked (GlcNAc...) asparagine glycan is linked to asparagine 66. Over residues 79-89 (HPPTGQQPPRL) the composition is skewed to pro residues. Residues asparagine 120 and asparagine 130 are each glycosylated (N-linked (GlcNAc...) asparagine). Residues 185–205 (IIFITLYTLVFCCCFFGNLLV) form a helical membrane-spanning segment. The Cytoplasmic portion of the chain corresponds to 206 to 217 (ILVVTLSRRLRS). The helical transmembrane segment at 218–238 (ITNFFLANLAFADFCVGLFCV) threads the bilayer. Over 239–269 (MQNLSIYLIESWVFGEFLCRMYQFVHSLSYT) the chain is Extracellular. Asparagine 241 is a glycosylation site (N-linked (GlcNAc...) asparagine). Residues cysteine 257 and cysteine 340 are joined by a disulfide bond. The helical transmembrane segment at 270 to 290 (ASIFILVVICMERYFAIVHPI) threads the bilayer. The Cytoplasmic segment spans residues 291 to 302 (TCKQILTAARLR). A helical membrane pass occupies residues 303–323 (MVIVTVWITSAVYSTPKFVFS). Topologically, residues 324-350 (KTIKNIHTQDGQEEEICVLDREMFNSK) are extracellular. Residues 351–371 (LLDMINFVLLYVMPLLVMTVL) form a helical membrane-spanning segment. At 372 to 552 (YSKIAIALWR…SSNVLRARRG (181 aa)) the chain is on the cytoplasmic side. Residues 390–401 (VVQHQHQQPQQP) are compositionally biased toward low complexity. Disordered stretches follow at residues 390-481 (VVQH…RGVS) and 515-537 (AHHQ…AGAT). Basic residues predominate over residues 414–429 (MYHHHPHHHHHHHQHH). Positions 441 to 454 (VGVGLGGGGGGGPG) are enriched in gly residues. Over residues 455–470 (PSLASGGSSTTSLSRK) the composition is skewed to low complexity. Positions 524-534 (SVGGGSGGAGA) are enriched in gly residues. A helical transmembrane segment spans residues 553–573 (VVRMLIIFVLTFALCNLPYHA). The Extracellular portion of the chain corresponds to 574–595 (RKMWQYWSRSYRGDSNFNALLT). Residues 596–616 (PLTFLVTYFNSGVNPLLYAFL) traverse the membrane as a helical segment. At 617–669 (SRNFRKGMKELLLCSWKKGKGKSSSNSSMHHKRKALQTHSLPTDTTHIGNEQL) the chain is on the cytoplasmic side. Residues 635–669 (GKGKSSSNSSMHHKRKALQTHSLPTDTTHIGNEQL) are disordered. A compositionally biased stretch (polar residues) spans 653-669 (QTHSLPTDTTHIGNEQL).

It belongs to the G-protein coupled receptor 1 family.

The protein resides in the cell membrane. Its function is as follows. G-protein coupled receptor which is activated by the Trissin peptide in vitro, leading to increased intracellular calcium ion levels. The chain is Trissin receptor from Drosophila melanogaster (Fruit fly).